A 586-amino-acid polypeptide reads, in one-letter code: CTP synthase (586 aa).

The amidoligase domain stretch occupies residues 1–265; sequence MVRFIFVTGG…ENKVLNFFNI (265 aa). Serine 13 is a binding site for CTP. Serine 13 lines the UTP pocket. ATP is bound by residues 14–19 and aspartate 71; that span reads SLGKGI. Positions 71 and 139 each coordinate Mg(2+). CTP is bound by residues 146-148, 186-191, and lysine 222; these read DIE and KTKPTQ. UTP is bound by residues 186–191 and lysine 222; that span reads KTKPTQ. The Glutamine amidotransferase type-1 domain maps to 290 to 582; it reads KIAIITKYHK…IKATIEYNKS (293 aa). Glycine 352 is a binding site for L-glutamine. The active-site Nucleophile; for glutamine hydrolysis is cysteine 379. L-glutamine-binding positions include 380–383 and glutamate 403; that span reads FGMQ. Positions 429–473 constitute an RPE1 insert domain; sequence AHISKCTYSEAFECDASTVYTNIHEDSNNLSTDKLQIETNFRNMS. An L-glutamine-binding site is contributed by arginine 510. Active-site residues include histidine 555 and glutamate 557.

It belongs to the CTP synthase family. As to quaternary structure, homotetramer.

It catalyses the reaction UTP + L-glutamine + ATP + H2O = CTP + L-glutamate + ADP + phosphate + 2 H(+). It carries out the reaction L-glutamine + H2O = L-glutamate + NH4(+). The catalysed reaction is UTP + NH4(+) + ATP = CTP + ADP + phosphate + 2 H(+). The protein operates within pyrimidine metabolism; CTP biosynthesis via de novo pathway; CTP from UDP: step 2/2. Allosterically activated by GTP, when glutamine is the substrate; GTP has no effect on the reaction when ammonia is the substrate. The allosteric effector GTP functions by stabilizing the protein conformation that binds the tetrahedral intermediate(s) formed during glutamine hydrolysis. Inhibited by the product CTP, via allosteric rather than competitive inhibition. Catalyzes the ATP-dependent amination of UTP to CTP with either L-glutamine or ammonia as the source of nitrogen. Regulates intracellular CTP levels through interactions with the four ribonucleotide triphosphates. In Rickettsia prowazekii (strain Madrid E), this protein is CTP synthase.